The primary structure comprises 505 residues: Endoglucanase 5 (505 aa).

The signal sequence occupies residues 1-31 (MWMRRNQIVRKLTLGVVTTVLGMSLSFSALS). The interval 32-334 (ATPVETHGQL…REQIRAGANL (303 aa)) is catalytic. Substrate is bound by residues His64, 68-69 (WF), Tyr95, and His130. Glu168 serves as the catalytic Proton donor. Tyr230 is a substrate binding site. Glu256 functions as the Nucleophile in the catalytic mechanism. Substrate contacts are provided by residues 262–263 (AS), Trp290, and 295–297 (KSE). The segment at 332-355 (ANLGGGDTPTTPTEPTNPGNGTTG) is disordered. Residues 335 to 352 (GGGDTPTTPTEPTNPGNG) are linker. Residues 339-355 (TPTTPTEPTNPGNGTTG) are compositionally biased toward low complexity. Residues 353-505 (TTGDVVLQYR…KGTLVWGVEP (153 aa)) enclose the CBM3 domain.

It belongs to the glycosyl hydrolase 5 (cellulase A) family.

Its subcellular location is the secreted. It catalyses the reaction Endohydrolysis of (1-&gt;4)-beta-D-glucosidic linkages in cellulose, lichenin and cereal beta-D-glucans.. In terms of biological role, endoglucanase with some exoglucanase activity. This chain is Endoglucanase 5 (celV), found in Pectobacterium carotovorum subsp. carotovorum (Erwinia carotovora subsp. carotovora).